Consider the following 369-residue polypeptide: 2-aminoethylphosphonate--pyruvate transaminase (369 aa).

K193 carries the post-translational modification N6-(pyridoxal phosphate)lysine.

It belongs to the class-V pyridoxal-phosphate-dependent aminotransferase family. PhnW subfamily. As to quaternary structure, homodimer. Pyridoxal 5'-phosphate is required as a cofactor.

The enzyme catalyses (2-aminoethyl)phosphonate + pyruvate = phosphonoacetaldehyde + L-alanine. Its function is as follows. Involved in phosphonate degradation. The protein is 2-aminoethylphosphonate--pyruvate transaminase of Burkholderia mallei (strain NCTC 10247).